Here is a 330-residue protein sequence, read N- to C-terminus: DNA primase small subunit PriS (330 aa).

Catalysis depends on residues aspartate 101 and aspartate 103. Positions 116, 119, 128, and 131 each coordinate Zn(2+). The active site involves aspartate 235.

The protein belongs to the eukaryotic-type primase small subunit family. As to quaternary structure, heterodimer of a small subunit (PriS) and a large subunit (PriL). Mg(2+) serves as cofactor. Requires Mn(2+) as cofactor.

Functionally, catalytic subunit of DNA primase, an RNA polymerase that catalyzes the synthesis of short RNA molecules used as primers for DNA polymerase during DNA replication. The small subunit contains the primase catalytic core and has DNA synthesis activity on its own. Binding to the large subunit stabilizes and modulates the activity, increasing the rate of DNA synthesis while decreasing the length of the DNA fragments, and conferring RNA synthesis capability. The DNA polymerase activity may enable DNA primase to also catalyze primer extension after primer synthesis. May also play a role in DNA repair. Possesses a template-independent 3'-terminal nucleotidyl transferase activity. In Saccharolobus solfataricus (strain ATCC 35092 / DSM 1617 / JCM 11322 / P2) (Sulfolobus solfataricus), this protein is DNA primase small subunit PriS.